The sequence spans 138 residues: Cysteine desulfuration protein SufE (138 aa).

Cysteine 51 (cysteine persulfide intermediate) is an active-site residue.

Belongs to the SufE family. In terms of assembly, homodimer. Interacts with SufS.

The protein resides in the cytoplasm. It functions in the pathway cofactor biosynthesis; iron-sulfur cluster biosynthesis. Participates in cysteine desulfuration mediated by SufS. Cysteine desulfuration mobilizes sulfur from L-cysteine to yield L-alanine and constitutes an essential step in sulfur metabolism for biosynthesis of a variety of sulfur-containing biomolecules. Functions as a sulfur acceptor for SufS, by mediating the direct transfer of the sulfur atom from the S-sulfanylcysteine of SufS, an intermediate product of cysteine desulfuration process. This chain is Cysteine desulfuration protein SufE, found in Escherichia coli O17:K52:H18 (strain UMN026 / ExPEC).